The sequence spans 150 residues: Large ribosomal subunit protein bL9 (150 aa).

The protein belongs to the bacterial ribosomal protein bL9 family.

In terms of biological role, binds to the 23S rRNA. This is Large ribosomal subunit protein bL9 from Paraburkholderia phytofirmans (strain DSM 17436 / LMG 22146 / PsJN) (Burkholderia phytofirmans).